The sequence spans 253 residues: Triosephosphate isomerase (253 aa).

9–11 (NWK) is a substrate binding site. Catalysis depends on H96, which acts as the Electrophile. E169 functions as the Proton acceptor in the catalytic mechanism. Substrate contacts are provided by residues G175, S215, and 236–237 (GG).

It belongs to the triosephosphate isomerase family. As to quaternary structure, homodimer.

The protein localises to the cytoplasm. It carries out the reaction D-glyceraldehyde 3-phosphate = dihydroxyacetone phosphate. The protein operates within carbohydrate biosynthesis; gluconeogenesis. Its pathway is carbohydrate degradation; glycolysis; D-glyceraldehyde 3-phosphate from glycerone phosphate: step 1/1. Its function is as follows. Involved in the gluconeogenesis. Catalyzes stereospecifically the conversion of dihydroxyacetone phosphate (DHAP) to D-glyceraldehyde-3-phosphate (G3P). This is Triosephosphate isomerase from Borreliella burgdorferi (strain ZS7) (Borrelia burgdorferi).